Consider the following 289-residue polypeptide: GTPase Era (289 aa).

The region spanning 2–167 (KSGFVSLIGR…LREIAKLLPE (166 aa)) is the Era-type G domain. The tract at residues 10-17 (GRTNAGKS) is G1. 10-17 (GRTNAGKS) lines the GTP pocket. The tract at residues 36–40 (NATRR) is G2. Positions 57 to 60 (DTPG) are G3. GTP-binding positions include 57 to 61 (DTPGL) and 116 to 119 (TKTD). The G4 stretch occupies residues 116–119 (TKTD). The segment at 146–148 (VNI) is G5. Residues 186–274 (YRDFILESVY…HLNLQIFVKK (89 aa)) form the KH type-2 domain.

Belongs to the TRAFAC class TrmE-Era-EngA-EngB-Septin-like GTPase superfamily. Era GTPase family. Monomer.

It localises to the cytoplasm. The protein resides in the cell inner membrane. Its function is as follows. An essential GTPase that binds both GDP and GTP, with rapid nucleotide exchange. Plays a role in 16S rRNA processing and 30S ribosomal subunit biogenesis and possibly also in cell cycle regulation and energy metabolism. The chain is GTPase Era from Campylobacter hominis (strain ATCC BAA-381 / DSM 21671 / CCUG 45161 / LMG 19568 / NCTC 13146 / CH001A).